A 118-amino-acid polypeptide reads, in one-letter code: Small ribosomal subunit protein bS6 (118 aa).

The protein belongs to the bacterial ribosomal protein bS6 family.

In terms of biological role, binds together with bS18 to 16S ribosomal RNA. This Parabacteroides distasonis (strain ATCC 8503 / DSM 20701 / CIP 104284 / JCM 5825 / NCTC 11152) protein is Small ribosomal subunit protein bS6.